We begin with the raw amino-acid sequence, 499 residues long: Pyruvate kinase (499 aa).

Position 50 (R50) interacts with substrate. K(+) is bound by residues N52, S54, D84, and T85. 52–55 (NFSH) is an ATP binding site. An ATP-binding site is contributed by R91. E241 lines the Mg(2+) pocket. Residues G264, D265, and T297 each contribute to the substrate site. A Mg(2+)-binding site is contributed by D265.

Belongs to the pyruvate kinase family. In terms of assembly, homotetramer. Mg(2+) is required as a cofactor. Requires K(+) as cofactor.

It catalyses the reaction pyruvate + ATP = phosphoenolpyruvate + ADP + H(+). The protein operates within carbohydrate degradation; glycolysis; pyruvate from D-glyceraldehyde 3-phosphate: step 5/5. Its activity is regulated as follows. Activated by fructose 2,6-bisphosphate, activated by the effector in a non cooperative manner. This is Pyruvate kinase (PYK) from Leishmania mexicana.